The sequence spans 201 residues: dITP/XTP pyrophosphatase (201 aa).

Residue 8 to 13 (TTNENK) participates in substrate binding. Asp68 functions as the Proton acceptor in the catalytic mechanism. Residue Asp68 coordinates Mg(2+). Residues Ser69, 155 to 158 (FGYD), Lys177, and 182 to 183 (HR) each bind substrate.

It belongs to the HAM1 NTPase family. As to quaternary structure, homodimer. Mg(2+) serves as cofactor.

The catalysed reaction is XTP + H2O = XMP + diphosphate + H(+). The enzyme catalyses dITP + H2O = dIMP + diphosphate + H(+). It carries out the reaction ITP + H2O = IMP + diphosphate + H(+). In terms of biological role, pyrophosphatase that catalyzes the hydrolysis of nucleoside triphosphates to their monophosphate derivatives, with a high preference for the non-canonical purine nucleotides XTP (xanthosine triphosphate), dITP (deoxyinosine triphosphate) and ITP. Seems to function as a house-cleaning enzyme that removes non-canonical purine nucleotides from the nucleotide pool, thus preventing their incorporation into DNA/RNA and avoiding chromosomal lesions. This is dITP/XTP pyrophosphatase from Borrelia garinii subsp. bavariensis (strain ATCC BAA-2496 / DSM 23469 / PBi) (Borreliella bavariensis).